We begin with the raw amino-acid sequence, 213 residues long: Uridine kinase (213 aa).

Residue 15–22 (GASASGKS) participates in ATP binding.

Belongs to the uridine kinase family.

Its subcellular location is the cytoplasm. The catalysed reaction is uridine + ATP = UMP + ADP + H(+). The enzyme catalyses cytidine + ATP = CMP + ADP + H(+). It participates in pyrimidine metabolism; CTP biosynthesis via salvage pathway; CTP from cytidine: step 1/3. Its pathway is pyrimidine metabolism; UMP biosynthesis via salvage pathway; UMP from uridine: step 1/1. The chain is Uridine kinase from Yersinia pseudotuberculosis serotype O:1b (strain IP 31758).